The following is a 339-amino-acid chain: Protein pelota homolog (339 aa).

The protein belongs to the eukaryotic release factor 1 family. Pelota subfamily. Monomer. It depends on a divalent metal cation as a cofactor.

The protein localises to the cytoplasm. Functionally, may function in recognizing stalled ribosomes, interact with stem-loop structures in stalled mRNA molecules, and effect endonucleolytic cleavage of the mRNA. May play a role in the release non-functional ribosomes and degradation of damaged mRNAs. Has endoribonuclease activity. In Picrophilus torridus (strain ATCC 700027 / DSM 9790 / JCM 10055 / NBRC 100828 / KAW 2/3), this protein is Protein pelota homolog.